The sequence spans 890 residues: Alanine--tRNA ligase (890 aa).

Positions 565, 569, 677, and 681 each coordinate Zn(2+).

It belongs to the class-II aminoacyl-tRNA synthetase family. It depends on Zn(2+) as a cofactor.

It localises to the cytoplasm. The catalysed reaction is tRNA(Ala) + L-alanine + ATP = L-alanyl-tRNA(Ala) + AMP + diphosphate. Functionally, catalyzes the attachment of alanine to tRNA(Ala) in a two-step reaction: alanine is first activated by ATP to form Ala-AMP and then transferred to the acceptor end of tRNA(Ala). Also edits incorrectly charged Ser-tRNA(Ala) and Gly-tRNA(Ala) via its editing domain. This is Alanine--tRNA ligase from Zymomonas mobilis subsp. mobilis (strain ATCC 31821 / ZM4 / CP4).